The chain runs to 613 residues: tRNA (uracil-5-)-methyltransferase homolog A (613 aa).

The interval 1-46 (MSEPAAEVPEPMEDCGQDASAVPSSAAPLCQKEEAGPGPAAGPGTQ) is disordered. Residues 63–136 (FKLELQNVPR…CPLSVRLARP (74 aa)) form the RRM domain. A coiled-coil region spans residues 170–200 (YTEQLEQKRLECERVLQKLAKEIGNTNRALL). Serine 368 carries the post-translational modification Phosphoserine. Positions 401, 451, and 500 each coordinate S-adenosyl-L-methionine. Catalysis depends on cysteine 528, which acts as the Nucleophile. Catalysis depends on glutamate 571, which acts as the Proton acceptor.

Belongs to the class I-like SAM-binding methyltransferase superfamily. RNA M5U methyltransferase family. As to expression, widely expressed at low level. Expressed at higher level in proliferating cells.

Its subcellular location is the cytoplasm. The protein resides in the cytosol. It catalyses the reaction uridine(54) in tRNA + S-adenosyl-L-methionine = 5-methyluridine(54) in tRNA + S-adenosyl-L-homocysteine + H(+). The catalysed reaction is a uridine in mRNA + S-adenosyl-L-methionine = a 5-methyluridine in mRNA + S-adenosyl-L-homocysteine + H(+). S-adenosyl-L-methionine-dependent methyltransferase that catalyzes the formation of 5-methyl-uridine in tRNAs and some mRNAs. Mainly catalyzes the methylation of uridine at position 54 (m5U54) in cytosolic tRNAs. Also able to mediate the formation of 5-methyl-uridine in some mRNAs. The sequence is that of tRNA (uracil-5-)-methyltransferase homolog A from Mus musculus (Mouse).